We begin with the raw amino-acid sequence, 497 residues long: MALWRGSAYAGFLALAVGCVFLLEPQLPGSALRSLWSSLQLGPAPAPPGVGSPEGRLAAAWDALIVRPARRWRRVAVGVNACVDVVLSGVKLLQALGLSPGNGKDHSELHSRNDLEEAFVHFMGKGAAAERFFSDKETFHDIAQVASEFPEAQHYVGGNAALIGQKFAANSDLKVLLCGPVGPKLHELLDDNVFVPPESLQEVDEFHLILEYQAGEEWDQLKAPHANRFIFSHDLSNGAMNMLEVFVSSLEEFQPDLVVLSGLHMMEGQSKEFQRKRLLEVVTSISDIPTGVPVHLELASMTNKELMSTIVHQQVFPAVTSLGLNEQELLFLSQSASGPHSSLSSWNGVPDVGVVSDILFWILKEHGKSESRASDLSRIHFHTLAYHILATVDGHWANQLAAVAAGARVAATQACATETIDTRRVSLKAPHEFMTSRLEAGSRVVLNPNEPVVEWHREGVSFHFTPVLVCKDPVRTVGLGDAISAEGLFYSEVHPHL.

A signal peptide spans 1 to 22 (MALWRGSAYAGFLALAVGCVFL). The 446-residue stretch at 52-497 (SPEGRLAAAW…LFYSEVHPHL (446 aa)) folds into the ADPK domain. Mg(2+) is bound by residues glutamate 297, glutamate 328, and aspartate 481. Catalysis depends on aspartate 481, which acts as the Proton acceptor.

This sequence belongs to the ADP-dependent glucokinase family. In terms of assembly, monomer. Requires Mg(2+) as cofactor.

The protein localises to the secreted. The enzyme catalyses D-glucose + ADP = D-glucose 6-phosphate + AMP + H(+). It functions in the pathway carbohydrate degradation; glycolysis. Functionally, catalyzes the phosphorylation of D-glucose to D-glucose 6-phosphate using ADP as the phosphate donor. GDP and CDP can replace ADP, but with reduced efficiency. The polypeptide is ADP-dependent glucokinase (ADPGK) (Bos taurus (Bovine)).